Reading from the N-terminus, the 122-residue chain is UPF0231 protein VP2494 (122 aa).

Belongs to the UPF0231 family.

The polypeptide is UPF0231 protein VP2494 (Vibrio parahaemolyticus serotype O3:K6 (strain RIMD 2210633)).